We begin with the raw amino-acid sequence, 78 residues long: uncharacterized protein (78 aa).

The helical transmembrane segment at 13 to 33 (STILILLMSVLILLLSIDILA) threads the bilayer.

The protein resides in the membrane. This is an uncharacterized protein from Methanocaldococcus jannaschii (strain ATCC 43067 / DSM 2661 / JAL-1 / JCM 10045 / NBRC 100440) (Methanococcus jannaschii).